Here is a 753-residue protein sequence, read N- to C-terminus: Inactive protein-tyrosine phosphatase egg-4 (753 aa).

Disordered stretches follow at residues Thr26–Asn46 and Ser75–Gly145. A compositionally biased stretch (low complexity) spans Asn35 to Asn46. Basic and acidic residues-rich tracts occupy residues Ala84–Leu94 and Val129–Gly145. Positions Met408–Phe661 constitute a Tyrosine-protein phosphatase domain.

The protein belongs to the protein-tyrosine phosphatase family. As to quaternary structure, part of a complex, consisting of pseudophosphatases egg-3, egg-4, egg-5 and kinase mbk-2; this complex is required for the oocyte-to-zygote transition. Interacts (via tyrosine-protein phosphatase domain) with kinase mbk-2 (via 'Tyr-619' and 'Tyr-621'); mbk-2 tyrosine phosphorylation enhances the interaction. The interaction inhibits mbk-2 kinase activity and is required for mbk-2 oocyte cortex localization. Interacts with egg-3.

It is found in the cytoplasm. It localises to the cell cortex. In terms of biological role, inactive phosphatase which acts redundantly with egg-5 in the oocyte-to-zygote transition. Required for the polarization of cortical actin cytoskeleton rearrangement in the oocyte before and after fertilization. Together with egg-5, required for the cortical localization of kinase mbk-2 and for the inhibition of mbk-2 kinase activity in maturing oocyte until the end of meiosis I. Also required for kinase mbk-2, pseudophosphatase egg-3 and chitin synthase chs-1 localization to cytoplasmic foci after fertilization. The sequence is that of Inactive protein-tyrosine phosphatase egg-4 from Caenorhabditis elegans.